A 467-amino-acid chain; its full sequence is Chromosomal replication initiator protein DnaA (467 aa).

The interval M1–H84 is domain I, interacts with DnaA modulators. The domain II stretch occupies residues H84 to P125. The disordered stretch occupies residues A89–A108. Residues I96–A108 are compositionally biased toward polar residues. The domain III, AAA+ region stretch occupies residues D126 to V342. Positions 170, 172, 173, and 174 each coordinate ATP. The domain IV, binds dsDNA stretch occupies residues S343–S467.

This sequence belongs to the DnaA family. In terms of assembly, oligomerizes as a right-handed, spiral filament on DNA at oriC.

It is found in the cytoplasm. Plays an essential role in the initiation and regulation of chromosomal replication. ATP-DnaA binds to the origin of replication (oriC) to initiate formation of the DNA replication initiation complex once per cell cycle. Binds the DnaA box (a 9 base pair repeat at the origin) and separates the double-stranded (ds)DNA. Forms a right-handed helical filament on oriC DNA; dsDNA binds to the exterior of the filament while single-stranded (ss)DNA is stabiized in the filament's interior. The ATP-DnaA-oriC complex binds and stabilizes one strand of the AT-rich DNA unwinding element (DUE), permitting loading of DNA polymerase. After initiation quickly degrades to an ADP-DnaA complex that is not apt for DNA replication. Binds acidic phospholipids. This is Chromosomal replication initiator protein DnaA from Synechococcus sp. (strain JA-2-3B'a(2-13)) (Cyanobacteria bacterium Yellowstone B-Prime).